A 197-amino-acid polypeptide reads, in one-letter code: MSARAPKELRLALPPCLLNRTFASPNASGSGNTGARGPGAGGSGTCITQVGQQLFQSFSSTLVLIVLVTLIFCLIVLSLSTFHIHKRRMKKRKMQRAQEEYERDHCSGSRGGGGLPRPGRQAPTHAKETRLERQPRDSPICAPSNASSSSSSSPGLPCQGPCAPPPPPPASSPQGAHAVSSCLDTAGEGLLQTVVLS.

Residues 1–23 (MSARAPKELRLALPPCLLNRTFA) form the signal peptide. Residues Asn19 and Asn26 are each glycosylated (N-linked (GlcNAc...) asparagine). Topologically, residues 24–61 (SPNASGSGNTGARGPGAGGSGTCITQVGQQLFQSFSST) are extracellular. The helical transmembrane segment at 62–82 (LVLIVLVTLIFCLIVLSLSTF) threads the bilayer. Residues 83–197 (HIHKRRMKKR…EGLLQTVVLS (115 aa)) are Cytoplasmic-facing. Residues 94-179 (MQRAQEEYER…ASSPQGAHAV (86 aa)) are disordered. Composition is skewed to basic and acidic residues over residues 96–107 (RAQEEYERDHCS) and 125–136 (HAKETRLERQPR). Residues 147-161 (SSSSSSSPGLPCQGP) are compositionally biased toward low complexity. Pro residues predominate over residues 162–171 (CAPPPPPPAS).

It localises to the membrane. This is an uncharacterized protein from Pongo abelii (Sumatran orangutan).